The sequence spans 346 residues: SUMO-activating enzyme subunit 1 (346 aa).

Met1 carries the post-translational modification N-acetylmethionine. Position 2 is an N-acetylvaline; in SUMO-activating enzyme subunit 1, N-terminally processed (Val2). At Ser12 the chain carries Phosphoserine. At Lys198 the chain carries N6-acetyllysine.

The protein belongs to the ubiquitin-activating E1 family. Heterodimer of SAE1 and UBA2/SAE2. The heterodimer corresponds to the two domains that are encoded on a single polypeptide chain in ubiquitin-activating enzyme E1. Interacts with UBE2I. As to expression, expression level increases during S phase and drops in G2 phase (at protein level).

The protein localises to the nucleus. The protein operates within protein modification; protein sumoylation. In terms of biological role, the heterodimer acts as an E1 ligase for SUMO1, SUMO2, SUMO3, and probably SUMO4. It mediates ATP-dependent activation of SUMO proteins followed by formation of a thioester bond between a SUMO protein and a conserved active site cysteine residue on UBA2/SAE2. The polypeptide is SUMO-activating enzyme subunit 1 (SAE1) (Homo sapiens (Human)).